We begin with the raw amino-acid sequence, 94 residues long: Ribonuclease VapC3 (94 aa).

D6 lines the Mg(2+) pocket.

The protein belongs to the PINc/VapC protein family. The cofactor is Mg(2+).

Toxic component of a type II toxin-antitoxin (TA) system. An RNase. Its cognate antitoxin is VapB3. This chain is Ribonuclease VapC3 (vapC3), found in Methanocaldococcus jannaschii (strain ATCC 43067 / DSM 2661 / JAL-1 / JCM 10045 / NBRC 100440) (Methanococcus jannaschii).